The chain runs to 345 residues: Phosphoribosylformylglycinamidine cyclo-ligase (345 aa).

This sequence belongs to the AIR synthase family.

It localises to the cytoplasm. It catalyses the reaction 2-formamido-N(1)-(5-O-phospho-beta-D-ribosyl)acetamidine + ATP = 5-amino-1-(5-phospho-beta-D-ribosyl)imidazole + ADP + phosphate + H(+). It participates in purine metabolism; IMP biosynthesis via de novo pathway; 5-amino-1-(5-phospho-D-ribosyl)imidazole from N(2)-formyl-N(1)-(5-phospho-D-ribosyl)glycinamide: step 2/2. This is Phosphoribosylformylglycinamidine cyclo-ligase from Shewanella sp. (strain ANA-3).